A 620-amino-acid chain; its full sequence is Protein CNGC15b (620 aa).

6 helical membrane passes run 73–93, 102–122, 161–181, 198–218, 237–257, and 356–376; these read IFLV…YLPI, IGIA…VFYV, GFFL…WIVI, FIII…SSQI, LMLY…LSIE, and GEIM…ALLI. 462–559 lines the a nucleoside 3',5'-cyclic phosphate pocket; it reads LFDAMDERML…SSTRTVKAIS (98 aa).

This sequence belongs to the cyclic nucleotide-gated cation channel (TC 1.A.1.5) family. As to quaternary structure, interacts (via N-terminus) with DMI1 (via c-terminus). The Nod factor has no effect on this interaction, implying that the complex is maintained after activation. In terms of tissue distribution, expressed in roots, stems, leaves, flowers and pods.

It localises to the nucleus membrane. Functionally, cyclic nucleotide-gated channel involved in the establishment of both rhizobial and mycorrhizal associations. Required for full activation of nuclear-localized Ca(2+) oscillations by Nod and Myc factors. Simultaneous activation of the K(+)-permeable channel DMI1 and the Ca(2+) channel CNGC15 can give rise to sustained Ca(2+) oscillations. May function during fertilization in both female and male gametophytic Ca(2+) signaling. The sequence is that of Protein CNGC15b from Medicago truncatula (Barrel medic).